Here is a 527-residue protein sequence, read N- to C-terminus: tRNA (uracil(54)-C(5))-methyltransferase (527 aa).

One can recognise a TRAM domain in the interval 107–167; that stretch reads PFERFQEIEV…DTYALADFLE (61 aa). C182, C188, C191, and C276 together coordinate [4Fe-4S] cluster. S-adenosyl-L-methionine-binding residues include Q347, Y383, E404, and D451. Catalysis depends on C478, which acts as the Nucleophile. E517 serves as the catalytic Proton acceptor.

It belongs to the class I-like SAM-binding methyltransferase superfamily. RNA M5U methyltransferase family.

It carries out the reaction uridine(54) in tRNA + S-adenosyl-L-methionine = 5-methyluridine(54) in tRNA + S-adenosyl-L-homocysteine + H(+). In terms of biological role, catalyzes the formation of 5-methyl-uridine at position 54 (m5U54) in all tRNA. May also have a role in tRNA stabilization or maturation. This is tRNA (uracil(54)-C(5))-methyltransferase from Schizosaccharomyces pombe (strain 972 / ATCC 24843) (Fission yeast).